We begin with the raw amino-acid sequence, 285 residues long: Golgi to ER traffic protein 2 (285 aa).

Basic and acidic residues predominate over residues 1-10 (MSELTEAEKR). 2 disordered regions span residues 1 to 72 (MSEL…KEDS) and 87 to 106 (MQGQGTGKSTPQDSSTPDLL). Serine 2 is modified (N-acetylserine). The Cytoplasmic portion of the chain corresponds to 2–148 (SELTEAEKRR…LDYHDYLLNR (147 aa)). The span at 11–20 (RLLRERRQKK) shows a compositional bias: basic residues. Residues 24-42 (GGASSRLNKITGQASSHLN) show a composition bias toward polar residues. Phosphoserine is present on serine 45. Over residues 49–60 (APSAAKTTPPAS) the composition is skewed to low complexity. A compositionally biased stretch (polar residues) spans 93–104 (GKSTPQDSSTPD). A helical membrane pass occupies residues 149–169 (LKAWTILVKWVFFLLPYLYLI). The Lumenal segment spans residues 170 to 196 (TRPNSSVWPAYAFTQSAWFAPLRNPSN). N-linked (GlcNAc...) asparagine glycosylation is found at asparagine 173 and asparagine 196. The chain crosses the membrane as a helical span at residues 197-216 (FTRIFATFEFLSISIYYQLL). Residues 217-263 (KNVEHKSKIKNLQDTNKLVKLVSLVPEGVIPVANLKGKLITLLQYWD) lie on the Cytoplasmic side of the membrane. The helical transmembrane segment at 264-284 (LLSMLITDISFVLIVLGLLTY) threads the bilayer. Leucine 285 is a topological domain (lumenal).

It belongs to the GET2 family. In terms of assembly, component of the Golgi to ER traffic (GET) complex, which is composed of GET1, GET2 and GET3. Within the complex, GET1 and GET2 form a heterotetramer which is stabilized by phosphatidylinositol binding and which binds to the GET3 homodimer.

The protein localises to the endoplasmic reticulum membrane. The protein resides in the golgi apparatus membrane. Required for the post-translational delivery of tail-anchored (TA) proteins to the endoplasmic reticulum. Together with GET1, acts as a membrane receptor for soluble GET3, which recognizes and selectively binds the transmembrane domain of TA proteins in the cytosol. The GET complex cooperates with the HDEL receptor ERD2 to mediate the ATP-dependent retrieval of resident ER proteins that contain a C-terminal H-D-E-L retention signal from the Golgi to the ER. Involved in DNA replication and DNA damage response and also in cell wall function. This is Golgi to ER traffic protein 2 from Saccharomyces cerevisiae (strain RM11-1a) (Baker's yeast).